The sequence spans 750 residues: Neprilysin (750 aa).

Glycine 2 carries N-myristoyl glycine lipidation. At 2-28 (GRSESQMDITDINAPKPKKKQRWTPLE) the chain is on the cytoplasmic side. Phosphoserine is present on residues serine 4 and serine 6. The short motif at 16–23 (PKPKKKQR) is the Stop-transfer sequence element. A helical; Signal-anchor for type II membrane protein membrane pass occupies residues 29–51 (ISLSVLVLLLTIIAVTMIALYAT). Topologically, residues 52–750 (YDDGICKSSD…MNPERKCRVW (699 aa)) are extracellular. One can recognise a Peptidase M13 domain in the interval 56–750 (ICKSSDCIKS…MNPERKCRVW (695 aa)). Disulfide bonds link cysteine 57–cysteine 62, cysteine 80–cysteine 735, cysteine 88–cysteine 695, cysteine 143–cysteine 411, cysteine 234–cysteine 242, and cysteine 621–cysteine 747. An a peptide-binding site is contributed by arginine 103. Residues asparagine 145 and asparagine 211 are each glycosylated (N-linked (GlcNAc...) asparagine). N-linked (GlcNAc...) asparagine glycans are attached at residues asparagine 285, asparagine 311, and asparagine 325. Residue histidine 584 participates in Zn(2+) binding. Residue glutamate 585 is part of the active site. Histidine 588 provides a ligand contact to Zn(2+). Asparagine 628 carries N-linked (GlcNAc...) asparagine glycosylation. Residue glutamate 647 participates in Zn(2+) binding. The active-site Proton donor is aspartate 651.

Belongs to the peptidase M13 family. The cofactor is Zn(2+). Post-translationally, myristoylation is a determinant of membrane targeting. Glycosylation at Asn-628 is necessary both for surface expression and neutral endopeptidase activity.

The protein localises to the cell membrane. It catalyses the reaction Preferential cleavage of polypeptides between hydrophobic residues, particularly with Phe or Tyr at P1'.. The enzyme catalyses substance P + H2O = substance P(1-9) + L-Leu-L-Met-NH2. It carries out the reaction substance P + H2O = substance P(1-7) + L-Phe-Gly-L-Leu-L-Met-NH2. The catalysed reaction is neurotensin + H2O = neurotensin(1-11) + L-isoleucyl-L-leucine. It catalyses the reaction neurotensin + H2O = neurotensin(1-10) + L-tyrosyl-L-isoleucyl-L-leucine. Thermolysin-like specificity, but is almost confined on acting on polypeptides of up to 30 amino acids. Biologically important in the destruction of opioid peptides such as Met- and Leu-enkephalins by cleavage of a Gly-Phe bond. Catalyzes cleavage of bradykinin, substance P and neurotensin peptides. Able to cleave angiotensin-1, angiotensin-2 and angiotensin 1-9. Involved in the degradation of the atrial natriuretic factor (ANF). Displays UV-inducible elastase activity toward skin preelastic and elastic fibers. This chain is Neprilysin, found in Mus musculus (Mouse).